Reading from the N-terminus, the 440-residue chain is Xaa-Pro dipeptidase (440 aa).

5 residues coordinate Mn(2+): Asp-246, Asp-257, His-337, Glu-382, and Glu-421.

Belongs to the peptidase M24B family. Bacterial-type prolidase subfamily. The cofactor is Mn(2+).

The catalysed reaction is Xaa-L-Pro dipeptide + H2O = an L-alpha-amino acid + L-proline. Its function is as follows. Splits dipeptides with a prolyl residue in the C-terminal position. This Aeromonas hydrophila subsp. hydrophila (strain ATCC 7966 / DSM 30187 / BCRC 13018 / CCUG 14551 / JCM 1027 / KCTC 2358 / NCIMB 9240 / NCTC 8049) protein is Xaa-Pro dipeptidase.